Reading from the N-terminus, the 375-residue chain is Growth/differentiation factor 8 (375 aa).

An N-terminal signal peptide occupies residues 1 to 23 (MQKLQLCVYIYLFMLIVAGPVDL). Positions 24–266 (NENSEQKENV…VTDTPKRSRR (243 aa)) are excised as a propeptide. N-linked (GlcNAc...) asparagine glycosylation occurs at N71. Intrachain disulfides connect C272–C282, C281–C340, C309–C372, and C313–C374.

Belongs to the TGF-beta family. Homodimer; disulfide-linked. Interacts with WFIKKN2, leading to inhibit its activity. Interacts with FSTL3. Post-translationally, synthesized as large precursor molecule that undergoes proteolytic cleavage to generate an N-terminal propeptide and a disulfide linked C-terminal dimer, which is the biologically active molecule. The circulating form consists of a latent complex of the C-terminal dimer and other proteins, including its propeptide, which maintain the C-terminal dimer in a latent, inactive state. Ligand activation requires additional cleavage of the prodomain by a tolloid-like metalloproteinase.

Its subcellular location is the secreted. Functionally, acts specifically as a negative regulator of skeletal muscle growth. This chain is Growth/differentiation factor 8 (MSTN), found in Pan paniscus (Pygmy chimpanzee).